The chain runs to 194 residues: ATP-dependent Clp protease proteolytic subunit 3 (194 aa).

Residue Ser-96 is the Nucleophile of the active site. Residue His-121 is part of the active site.

The protein belongs to the peptidase S14 family. As to quaternary structure, fourteen ClpP subunits assemble into 2 heptameric rings which stack back to back to give a disk-like structure with a central cavity, resembling the structure of eukaryotic proteasomes.

It is found in the cytoplasm. It catalyses the reaction Hydrolysis of proteins to small peptides in the presence of ATP and magnesium. alpha-casein is the usual test substrate. In the absence of ATP, only oligopeptides shorter than five residues are hydrolyzed (such as succinyl-Leu-Tyr-|-NHMec, and Leu-Tyr-Leu-|-Tyr-Trp, in which cleavage of the -Tyr-|-Leu- and -Tyr-|-Trp bonds also occurs).. In terms of biological role, cleaves peptides in various proteins in a process that requires ATP hydrolysis. Has a chymotrypsin-like activity. Plays a major role in the degradation of misfolded proteins. The sequence is that of ATP-dependent Clp protease proteolytic subunit 3 from Rhizobium johnstonii (strain DSM 114642 / LMG 32736 / 3841) (Rhizobium leguminosarum bv. viciae).